We begin with the raw amino-acid sequence, 94 residues long: Co-chaperonin GroES (94 aa).

The protein belongs to the GroES chaperonin family. Heptamer of 7 subunits arranged in a ring. Interacts with the chaperonin GroEL.

Its subcellular location is the cytoplasm. In terms of biological role, together with the chaperonin GroEL, plays an essential role in assisting protein folding. The GroEL-GroES system forms a nano-cage that allows encapsulation of the non-native substrate proteins and provides a physical environment optimized to promote and accelerate protein folding. GroES binds to the apical surface of the GroEL ring, thereby capping the opening of the GroEL channel. This chain is Co-chaperonin GroES, found in Listeria monocytogenes serotype 4b (strain CLIP80459).